The chain runs to 257 residues: MTAAVFFGCAFIAFGPALALYVFTIATDPLRVIFLIAGAFFWLVSLLLSSVFWFLVRVITDNRDGPVQNYLLIFGVLLSVCIQELFRLAYYKLLKKASEGLKSINPEETAPSMRLLAYVSGLGFGIMSGVFSFVNTLSNSLGPGTVGIHGDSPQFFLNSAFMTLVVIMLHVFWGVVFFDGCEKNKWYTLLTVLLTHLVVSTQTFLSPYYEVNLVTAYIIMVLMGIWAFYVAGGSCRSLKLCLLCQDKDFLLYNQRSR.

Transmembrane regions (helical) follow at residues 5–25 (VFFGCAFIAFGPALALYVFTI), 32–52 (VIFLIAGAFFWLVSLLLSSVF), 66–86 (PVQNYLLIFGVLLSVCIQELF), 115–135 (LLAYVSGLGFGIMSGVFSFVN), 160–180 (AFMTLVVIMLHVFWGVVFFDG), 186–206 (WYTLLTVLLTHLVVSTQTFLS), and 213–233 (LVTAYIIMVLMGIWAFYVAGG).

Belongs to the APH-1 family. Probable component of the gamma-secretase complex, a complex composed of a presenilin homodimer (PSEN1 or PSEN2), nicastrin (NCSTN), APH1 (APH1A or APH1B) and PEN2. Such minimal complex is sufficient for secretase activity, although other components may exist. Interacts with PSEN1 and PSEN2.

It is found in the membrane. Probable subunit of the gamma-secretase complex, an endoprotease complex that catalyzes the intramembrane cleavage of integral proteins such as Notch receptors and APP (amyloid-beta precursor protein). It probably represents a stabilizing cofactor for the presenilin homodimer that promotes the formation of a stable complex. Probably present in a minority of gamma-secretase complexes compared to APH1A. In Mus musculus (Mouse), this protein is Gamma-secretase subunit APH-1B (Aph1b).